Consider the following 884-residue polypeptide: Translation initiation factor IF-2 (884 aa).

Composition is skewed to basic and acidic residues over residues 110–153 (AKAK…KEKA) and 193–234 (KQKE…DHHV). The segment at 110–291 (AKAKAEADAK…NRSTAPQSMA (182 aa)) is disordered. Basic residues predominate over residues 255-268 (GRRARNKPTNKKRG). The tr-type G domain occupies 384–553 (TRAPVVTIMG…LLQSEVLELK (170 aa)). The tract at residues 393-400 (GHVDHGKT) is G1. A GTP-binding site is contributed by 393-400 (GHVDHGKT). A G2 region spans residues 418–422 (GITQH). Residues 439-442 (DTPG) are G3. GTP contacts are provided by residues 439–443 (DTPGH) and 493–496 (NKMD). Positions 493 to 496 (NKMD) are G4. A G5 region spans residues 529–531 (SAK).

This sequence belongs to the TRAFAC class translation factor GTPase superfamily. Classic translation factor GTPase family. IF-2 subfamily.

Its subcellular location is the cytoplasm. In terms of biological role, one of the essential components for the initiation of protein synthesis. Protects formylmethionyl-tRNA from spontaneous hydrolysis and promotes its binding to the 30S ribosomal subunits. Also involved in the hydrolysis of GTP during the formation of the 70S ribosomal complex. In Shewanella denitrificans (strain OS217 / ATCC BAA-1090 / DSM 15013), this protein is Translation initiation factor IF-2.